We begin with the raw amino-acid sequence, 151 residues long: Proteolipid protein 2 (151 aa).

Residues 19–137 form the MARVEL domain; that stretch reads FSRTKKGILL…DAYITFPLKQ (119 aa). 4 helical membrane-spanning segments follow: residues 25–45, 48–68, 85–105, and 112–132; these read GILL…FSAS, AYSS…VFYM, FFRS…VLVE, and IVAG…AYIT.

It localises to the membrane. Its function is as follows. May play a role in cell differentiation in the intestinal epithelium. The chain is Proteolipid protein 2 (Plp2) from Rattus norvegicus (Rat).